The chain runs to 491 residues: MGETTVEVRKVKNYINGKWIESSTSLYEDVVNPATKEVICQVPLSTKADVEYAVEAAKTAFAKWSKVAVPRRARILFNYQQLLQRDKEELARLITIENGKNLTEARGEVQRGIENVEFAAGAPSLMMGDSLPMIATDVEASNYRYPIGVVGGIAPFNFPMMVPCWMFPMAIALGNAFLLKPSERTPLLTEKLADLLTEAGVPDGVFNVVYGAHDVVNGMLEHPDIKAISFVGSKPVGEYVYKKASENLKRVQALTGAKNHTIVLNDADLDDAVTNIAGAAFGSAGERCMACAVVTVEEGIADAFVAKLKAKAESLVMGNGLDDGVFLGPVIREENKNRTIAYIEKGVEEGATLVCDGRSRVSADGYFIGPTIFENVTTDMTIWKDEIFAPVLSIIRVKNLDEGIQIANRSEFANGACLFTTNAAAVRYFRENIDAGMLGINLGVPAPMAFFPFSGWKSSFYGTLHANGKDSVDFYTRKKVVTARYPKPSFD.

Residues Ala154, Phe156, Lys180, Glu183, Arg184, Ser233, and Thr255 each coordinate NAD(+). The active-site Nucleophile is the Cys288. Glu386 is a binding site for NAD(+).

The protein belongs to the aldehyde dehydrogenase family. IolA subfamily. Homotetramer.

It carries out the reaction 3-oxopropanoate + NAD(+) + CoA + H2O = hydrogencarbonate + acetyl-CoA + NADH + H(+). It catalyses the reaction 2-methyl-3-oxopropanoate + NAD(+) + CoA + H2O = propanoyl-CoA + hydrogencarbonate + NADH + H(+). It participates in polyol metabolism; myo-inositol degradation into acetyl-CoA; acetyl-CoA from myo-inositol: step 7/7. Catalyzes the oxidation of malonate semialdehyde (MSA) and methylmalonate semialdehyde (MMSA) into acetyl-CoA and propanoyl-CoA, respectively. Is involved in a myo-inositol catabolic pathway. Bicarbonate, and not CO2, is the end-product of the enzymatic reaction. This chain is Malonate-semialdehyde dehydrogenase 1, found in Shouchella clausii (strain KSM-K16) (Alkalihalobacillus clausii).